The chain runs to 348 residues: Uroporphyrinogen decarboxylase (348 aa).

Residues 27–31 (RQAGR), phenylalanine 46, aspartate 76, tyrosine 152, serine 207, and histidine 320 each bind substrate.

Belongs to the uroporphyrinogen decarboxylase family. In terms of assembly, homodimer.

It is found in the cytoplasm. The enzyme catalyses uroporphyrinogen III + 4 H(+) = coproporphyrinogen III + 4 CO2. It functions in the pathway porphyrin-containing compound metabolism; protoporphyrin-IX biosynthesis; coproporphyrinogen-III from 5-aminolevulinate: step 4/4. Catalyzes the decarboxylation of four acetate groups of uroporphyrinogen-III to yield coproporphyrinogen-III. This is Uroporphyrinogen decarboxylase from Bacillus anthracis.